Consider the following 501-residue polypeptide: Lysine--tRNA ligase (501 aa).

2 residues coordinate Mg(2+): Glu-412 and Glu-419.

This sequence belongs to the class-II aminoacyl-tRNA synthetase family. As to quaternary structure, homodimer. Mg(2+) serves as cofactor.

Its subcellular location is the cytoplasm. It carries out the reaction tRNA(Lys) + L-lysine + ATP = L-lysyl-tRNA(Lys) + AMP + diphosphate. This Chlorobium luteolum (strain DSM 273 / BCRC 81028 / 2530) (Pelodictyon luteolum) protein is Lysine--tRNA ligase.